We begin with the raw amino-acid sequence, 245 residues long: Probable transcriptional regulatory protein MAG6590 (245 aa).

This sequence belongs to the TACO1 family.

It localises to the cytoplasm. The polypeptide is Probable transcriptional regulatory protein MAG6590 (Mycoplasmopsis agalactiae (strain NCTC 10123 / CIP 59.7 / PG2) (Mycoplasma agalactiae)).